We begin with the raw amino-acid sequence, 116 residues long: Ribonuclease P protein component (116 aa).

The protein belongs to the RnpA family. In terms of assembly, consists of a catalytic RNA component (M1 or rnpB) and a protein subunit.

It catalyses the reaction Endonucleolytic cleavage of RNA, removing 5'-extranucleotides from tRNA precursor.. Functionally, RNaseP catalyzes the removal of the 5'-leader sequence from pre-tRNA to produce the mature 5'-terminus. It can also cleave other RNA substrates such as 4.5S RNA. The protein component plays an auxiliary but essential role in vivo by binding to the 5'-leader sequence and broadening the substrate specificity of the ribozyme. This is Ribonuclease P protein component from Leuconostoc mesenteroides subsp. mesenteroides (strain ATCC 8293 / DSM 20343 / BCRC 11652 / CCM 1803 / JCM 6124 / NCDO 523 / NBRC 100496 / NCIMB 8023 / NCTC 12954 / NRRL B-1118 / 37Y).